The sequence spans 370 residues: Putative methylthioribose-1-phosphate isomerase (370 aa).

Substrate is bound by residues 66-68 (RGA), Arg109, and Gln217. The Proton donor role is filled by Asp258. 268-269 (NK) provides a ligand contact to substrate.

The protein belongs to the eIF-2B alpha/beta/delta subunits family. MtnA subfamily.

It catalyses the reaction 5-(methylsulfanyl)-alpha-D-ribose 1-phosphate = 5-(methylsulfanyl)-D-ribulose 1-phosphate. Catalyzes the interconversion of methylthioribose-1-phosphate (MTR-1-P) into methylthioribulose-1-phosphate (MTRu-1-P). This is Putative methylthioribose-1-phosphate isomerase from Aeropyrum pernix (strain ATCC 700893 / DSM 11879 / JCM 9820 / NBRC 100138 / K1).